The following is a 306-amino-acid chain: Meiotically up-regulated gene 73 protein (306 aa).

7 helical membrane passes run 28-48 (YWAV…VSIF), 59-79 (FFSI…CNYG), 103-123 (YIQW…TVGV), 125-145 (ILEI…LLAA), 154-174 (WAYY…SVVL), 190-210 (FLWS…CWIL), and 224-244 (IFYS…FSWM).

This sequence belongs to the archaeal/bacterial/fungal opsin family.

It localises to the membrane. Has a role in meiosis. This is Meiotically up-regulated gene 73 protein (mug73) from Schizosaccharomyces pombe (strain 972 / ATCC 24843) (Fission yeast).